Reading from the N-terminus, the 104-residue chain is Large ribosomal subunit protein uL24 (104 aa).

The protein belongs to the universal ribosomal protein uL24 family. Part of the 50S ribosomal subunit.

One of two assembly initiator proteins, it binds directly to the 5'-end of the 23S rRNA, where it nucleates assembly of the 50S subunit. Its function is as follows. One of the proteins that surrounds the polypeptide exit tunnel on the outside of the subunit. The protein is Large ribosomal subunit protein uL24 of Yersinia pseudotuberculosis serotype O:1b (strain IP 31758).